A 278-amino-acid chain; its full sequence is uncharacterized protein (278 aa).

Residues 127 to 151 (PPTPSPPPPPAPTQPTRPTPGPAFF) are compositionally biased toward pro residues. Positions 127-174 (PPTPSPPPPPAPTQPTRPTPGPAFFPQPFKVELHHPTPKTSSLPAPSL) are disordered. The span at 164–174 (PKTSSLPAPSL) shows a compositional bias: low complexity.

This is an uncharacterized protein from Botryotinia fuckeliana (Noble rot fungus).